The sequence spans 1843 residues: Protein TIC 214 (1843 aa).

Transmembrane regions (helical) follow at residues 18–38 (IINS…FSIG), 64–84 (FITG…HLAL), 87–107 (PHTI…WNNH), 124–144 (LSIQ…HFIL), 172–192 (VGWL…LFWI), and 217–237 (IFSI…PSPI). 5 disordered regions span residues 244–281 (ETSK…AAEK), 557–576 (EEIE…SRKA), 582–647 (FTDN…DEVA), 724–744 (NSEE…RQEN), and 1527–1586 (SLEL…KKKK). A compositionally biased stretch (acidic residues) spans 251-264 (REESEEETDVEIET). Over residues 269–281 (KGTKQEQEGAAEK) the composition is skewed to basic and acidic residues. Over residues 590–639 (NTPTSTTETTSTAETTSTTETTSTTKNTSTTKNTSTTETTSTTENENTSN) the composition is skewed to low complexity. 2 stretches are compositionally biased toward basic and acidic residues: residues 730 to 744 (TKEK…RQEN) and 1527 to 1540 (SLEL…KKPA). Positions 1543–1562 (NIGSDTQKQGNPGSDPSTQQ) are enriched in polar residues. Over residues 1563-1580 (KDIKKNVKEDYDGRSDIQ) the composition is skewed to basic and acidic residues.

It belongs to the TIC214 family. Part of the Tic complex.

It localises to the plastid. It is found in the chloroplast inner membrane. Involved in protein precursor import into chloroplasts. May be part of an intermediate translocation complex acting as a protein-conducting channel at the inner envelope. This Nandina domestica (Heavenly bamboo) protein is Protein TIC 214.